The chain runs to 470 residues: MISVTTLKDRKVALFGLGGSGFATARALVTGGAEVTAWDDNPDSVAKAAAEGIRTEDLRNIDWSQQALFVLSPGVPLTHPKPHWTVDLARAAGVDIVGDVELFVRERRAHAPDCPFIAITGTNGKSTTTALIAHILKSAGYDTQLGGNIGTAVLTLDPPKAERYYVVECSSYQIDLAPTLNPSAGILLNLTPDHLDRHGTMQHYADIKERLVAGSDVAIVGVDDSHSALIADRVERAGVKVVRISRRNVVADGIYAEGTKLIQAAGGAMLPFADLDGIQTLRGSHNAQNAAAAVAACLAVGVSADAIRAGLASFPGLKHRMQPVGQRGRVVFVNDSKATNADAAAPALSSYDRIYWIAGGLPKAGGITTLAPYFPRIAKAYLIGEAAAEFAATLGEAVPYEISGTLERAVAHAAADAERDESAASAVMLSPACASFDQYKNFEVRGEAFVGHVAALDGITMLIGPATGEK.

121 to 127 (GTNGKST) serves as a coordination point for ATP.

It belongs to the MurCDEF family.

The protein localises to the cytoplasm. The enzyme catalyses UDP-N-acetyl-alpha-D-muramoyl-L-alanine + D-glutamate + ATP = UDP-N-acetyl-alpha-D-muramoyl-L-alanyl-D-glutamate + ADP + phosphate + H(+). It participates in cell wall biogenesis; peptidoglycan biosynthesis. Its function is as follows. Cell wall formation. Catalyzes the addition of glutamate to the nucleotide precursor UDP-N-acetylmuramoyl-L-alanine (UMA). This is UDP-N-acetylmuramoylalanine--D-glutamate ligase from Rhizobium johnstonii (strain DSM 114642 / LMG 32736 / 3841) (Rhizobium leguminosarum bv. viciae).